A 245-amino-acid chain; its full sequence is 6-carboxyhexanoate--CoA ligase (245 aa).

This sequence belongs to the BioW family. As to quaternary structure, homodimer. Mg(2+) serves as cofactor.

It catalyses the reaction heptanedioate + ATP + CoA = 6-carboxyhexanoyl-CoA + AMP + diphosphate. The protein operates within metabolic intermediate metabolism; pimeloyl-CoA biosynthesis; pimeloyl-CoA from pimelate: step 1/1. Its function is as follows. Catalyzes the transformation of pimelate into pimeloyl-CoA with concomitant hydrolysis of ATP to AMP. This is 6-carboxyhexanoate--CoA ligase from Thermodesulfovibrio yellowstonii (strain ATCC 51303 / DSM 11347 / YP87).